The sequence spans 692 residues: Sulfhydryl oxidase 2 (692 aa).

Positions 1 to 38 (MAAARAVARDPGAYARQPPSLRAARLPRLLFLLAVVAA) are cleaved as a signal peptide. The 119-residue stretch at 54 to 172 (SDAVWLLDSG…RQTMIDFLQN (119 aa)) folds into the Thioredoxin domain. Residue asparagine 71 is glycosylated (N-linked (GlcNAc...) asparagine). Residues cysteine 85 and cysteine 88 each act as nucleophile in the active site. Intrachain disulfides connect cysteine 85/cysteine 88 and cysteine 116/cysteine 125. Residues asparagine 172, asparagine 212, and asparagine 260 are each glycosylated (N-linked (GlcNAc...) asparagine). Cysteine 412 and cysteine 424 are disulfide-bonded. Residues 415–524 (SRLELRGYPC…EDPKFPKVPW (110 aa)) enclose the ERV/ALR sulfhydryl oxidase domain. Residues arginine 420, tryptophan 427, histidine 431, glutamate 472, histidine 476, 499 to 506 (WRKHNMVN), lysine 521, and tryptophan 524 contribute to the FAD site. Cysteine 470 and cysteine 473 are disulfide-bonded. Cysteine 530 and cysteine 533 are disulfide-bonded. A disordered region spans residues 568–607 (DQGSPGEWEAQGREQEEGKGLNPSGKSWRHHDTGSLRPPH). The span at 577–586 (AQGREQEEGK) shows a compositional bias: basic and acidic residues. The chain crosses the membrane as a helical span at residues 656 to 676 (SLCVVLYVASSLFLMIMYFFF).

Belongs to the quiescin-sulfhydryl oxidase (QSOX) family. FAD serves as cofactor.

The protein localises to the membrane. The catalysed reaction is 2 R'C(R)SH + O2 = R'C(R)S-S(R)CR' + H2O2. Catalyzes the oxidation of sulfhydryl groups in peptide and protein thiols to disulfides with the reduction of oxygen to hydrogen peroxide. May contribute to disulfide bond formation in a variety of secreted proteins. This is Sulfhydryl oxidase 2 (Qsox2) from Mus musculus (Mouse).